We begin with the raw amino-acid sequence, 269 residues long: Formamidopyrimidine-DNA glycosylase (269 aa).

Residue Pro-2 is the Schiff-base intermediate with DNA of the active site. The active-site Proton donor is the Glu-3. Lys-57 acts as the Proton donor; for beta-elimination activity in catalysis. DNA-binding residues include His-90, Arg-109, and Lys-150. Residues 235-269 (RVYGRNGEPCRTCGTPIETAKHGQRSTFFCRRCQK) form an FPG-type zinc finger. Residue Arg-259 is the Proton donor; for delta-elimination activity of the active site.

It belongs to the FPG family. As to quaternary structure, monomer. It depends on Zn(2+) as a cofactor.

The enzyme catalyses Hydrolysis of DNA containing ring-opened 7-methylguanine residues, releasing 2,6-diamino-4-hydroxy-5-(N-methyl)formamidopyrimidine.. The catalysed reaction is 2'-deoxyribonucleotide-(2'-deoxyribose 5'-phosphate)-2'-deoxyribonucleotide-DNA = a 3'-end 2'-deoxyribonucleotide-(2,3-dehydro-2,3-deoxyribose 5'-phosphate)-DNA + a 5'-end 5'-phospho-2'-deoxyribonucleoside-DNA + H(+). Its function is as follows. Involved in base excision repair of DNA damaged by oxidation or by mutagenic agents. Acts as a DNA glycosylase that recognizes and removes damaged bases. Has a preference for oxidized purines, such as 7,8-dihydro-8-oxoguanine (8-oxoG). Has AP (apurinic/apyrimidinic) lyase activity and introduces nicks in the DNA strand. Cleaves the DNA backbone by beta-delta elimination to generate a single-strand break at the site of the removed base with both 3'- and 5'-phosphates. In Pectobacterium carotovorum subsp. carotovorum (strain PC1), this protein is Formamidopyrimidine-DNA glycosylase.